The primary structure comprises 126 residues: Small ribosomal subunit protein uS11 (126 aa).

This sequence belongs to the universal ribosomal protein uS11 family. As to quaternary structure, part of the 30S ribosomal subunit.

In terms of biological role, located on the platform of the 30S subunit. The polypeptide is Small ribosomal subunit protein uS11 (Methanosarcina acetivorans (strain ATCC 35395 / DSM 2834 / JCM 12185 / C2A)).